Here is a 580-residue protein sequence, read N- to C-terminus: Cis-3-hydroxy-L-proline dehydratase (580 aa).

Serine 66 functions as the Proton acceptor in the catalytic mechanism.

This sequence belongs to the AcnX family. In terms of assembly, monomer. Requires Fe(3+) as cofactor.

The enzyme catalyses cis-3-hydroxy-L-proline = 1-pyrroline-2-carboxylate + H2O. With respect to regulation, inhibited by Zn(2+), Cd(2+) and Hg(2+), but not by Co(2+), Ni(2+), Mn(2+), Sr(2+), Mg(2+), or Fe(3+). Inhibited by pyrrole-2-carboxylate and its derivative 2-thiophenecarboxylate, but not by trans-aconitate, fluorocitrate and oxalomalate, which are typical inhibitors of the aconitase enzymes. In terms of biological role, catalyzes the dehydration of cis-3-hydroxy-L-proline (c3LHyp) to Delta(1)-pyrroline-2-carboxylate (Pyr2C). Also has activity with (2S,3S,4R)-3,4-dihydroxyproline as substrate, albeit at about 300-fold lower rate. No activity with L-proline, trans-4-hydroxy-L-proline (t4LHyp), cis-4-hydroxy-L-proline (c4LHyp), trans-3-hydroxy-L-proline (t3LHyp), D-proline, cis-4-hydroxy-D-proline (c4DHyp), trans-4-hydroxy-D-proline (t4DHyp) or L-serine as substrates. No hydro-lyase activity with citrate or cis-acotinate. Does not catalyze 2-epimerization of c3LHyp to trans-3-hydroxy-D-proline (t3DHyp). Involved in a degradation pathway that converts c3LHyp to L-proline, which would allow P.aeruginosa to grow on c3LHyp as a sole carbon source. The chain is Cis-3-hydroxy-L-proline dehydratase from Pseudomonas aeruginosa (strain ATCC 15692 / DSM 22644 / CIP 104116 / JCM 14847 / LMG 12228 / 1C / PRS 101 / PAO1).